The chain runs to 460 residues: Beta-1,3-xylanase TXYA (460 aa).

Residues 1–22 form the signal peptide; it reads MKKLAKMISVATLGACAFQAHA. Positions 23–337 constitute a GH26 domain; the sequence is LDGKLVPDQG…LSDPKFIRHS (315 aa). Catalysis depends on glutamate 138, which acts as the Proton donor. The active-site Nucleophile is glutamate 234. The tract at residues 347 to 371 is disordered; the sequence is GNSDGGNGGDNGGDNGGDNGGETPE. Positions 348–366 are enriched in gly residues; that stretch reads NSDGGNGGDNGGDNGGDNG. Residues 368–460 form a carbohydrate binding module (CBM) region; it reads ETPENCTDDF…TVTFTNQVCN (93 aa). Cystine bridges form between cysteine 373–cysteine 459 and cysteine 404–cysteine 409.

It belongs to the glycosyl hydrolase 26 family.

It catalyses the reaction Random hydrolysis of (1-&gt;3)-beta-D-glycosidic linkages in (1-&gt;3)-beta-D-xylans.. With respect to regulation, completely inhibited by Cu(2+), Hg(2+) and N-bromosuccinimide. Strongly inhibited by Ag(+), Zn(2+) and Pb(2+). Moderately inhibited by Fe(3+), Al(3+), Mn(2+), dithiothreitol and p-chloromercuribenzoic acid. Slightly activated by Mg(2+) and Ca(2+). Unaffected by Na(+), K(+), Ba(2+), EDTA, iodoacetic acid and N-ethylmalaimide. In terms of biological role, catalyzes the hydrolysis of beta-1,3-xylan into oligosaccharides, mainly xylotriose and xylobiose with smaller amounts of xylotetraose, xylose, xylopentaose and xylohexaose. Weakly active toward beta-1,3-xylotriose, yielding xylose and xylobiose. Converts beta-1,3-xylotetraose into xylotriose, xylobiose and xylose. Converts beta-1,3-xylopentaose into xylotetraose, xylotriose, xylobiose and xylose. Does not hydrolyze xylobiose, p-nitrophenyl-beta-xyloside, beta-1,4-xylan, curdlan or carboxymethylcellulose. This Vibrio sp protein is Beta-1,3-xylanase TXYA.